The chain runs to 441 residues: Mannose-6-phosphate isomerase 2 (441 aa).

Zn(2+) contacts are provided by glutamine 131, histidine 133, glutamate 158, and histidine 296. Arginine 315 is a catalytic residue.

The protein belongs to the mannose-6-phosphate isomerase type 1 family. Requires Zn(2+) as cofactor. Not expressed in any organs under light (at protein level).

The catalysed reaction is D-mannose 6-phosphate = D-fructose 6-phosphate. Its pathway is nucleotide-sugar biosynthesis; GDP-alpha-D-mannose biosynthesis; alpha-D-mannose 1-phosphate from D-fructose 6-phosphate: step 1/2. With respect to regulation, inhibited by EDTA, Zn(2+), Cd(2+), DTT, p-chloromercuribenzoate and L-ascorbic acid (AsA). Functionally, involved in the synthesis of the GDP-mannose and dolichol-phosphate-mannose required for a number of critical mannosyl transfer reactions. The protein is Mannose-6-phosphate isomerase 2 (PMI2) of Arabidopsis thaliana (Mouse-ear cress).